The primary structure comprises 662 residues: Probable protein phosphatase 2C 4 (662 aa).

The residue at position 153 (Ser-153) is a Phosphoserine. The PPM-type phosphatase domain occupies 249–653 (DVSLENQNLQ…DDVSIVVISL (405 aa)). Residues Asp-286, Gly-287, Asp-581, and Asp-644 each coordinate Mn(2+).

The protein belongs to the PP2C family. It depends on Mg(2+) as a cofactor. The cofactor is Mn(2+). In terms of tissue distribution, expressed in seedlings, roots, leaves, stems, young inflorescences, flowers and siliques.

The protein localises to the nucleus. It catalyses the reaction O-phospho-L-seryl-[protein] + H2O = L-seryl-[protein] + phosphate. It carries out the reaction O-phospho-L-threonyl-[protein] + H2O = L-threonyl-[protein] + phosphate. Involved in leaf development regulation. In Arabidopsis thaliana (Mouse-ear cress), this protein is Probable protein phosphatase 2C 4 (PLL5).